The primary structure comprises 154 residues: NADPH-dependent 7-cyano-7-deazaguanine reductase (154 aa).

A compositionally biased stretch (basic and acidic residues) spans 1-11; that stretch reads MAKKPVKDLKQ. The disordered stretch occupies residues 1–31; that stretch reads MAKKPVKDLKQLGHATPVPASPEEATLERVP. Cys52 functions as the Thioimide intermediate in the catalytic mechanism. The Proton donor role is filled by Asp59. Substrate-binding positions include 74–76 and 93–94; these read IES and HE.

The protein belongs to the GTP cyclohydrolase I family. QueF type 1 subfamily.

It localises to the cytoplasm. It catalyses the reaction 7-aminomethyl-7-carbaguanine + 2 NADP(+) = 7-cyano-7-deazaguanine + 2 NADPH + 3 H(+). It functions in the pathway tRNA modification; tRNA-queuosine biosynthesis. Functionally, catalyzes the NADPH-dependent reduction of 7-cyano-7-deazaguanine (preQ0) to 7-aminomethyl-7-deazaguanine (preQ1). The polypeptide is NADPH-dependent 7-cyano-7-deazaguanine reductase (Parvibaculum lavamentivorans (strain DS-1 / DSM 13023 / NCIMB 13966)).